The primary structure comprises 1012 residues: Vacuolar membrane protease (1012 aa).

At 1-60 (MRRSTDPRNLLVRRGPLLVDGESAISELDPGFFPTGDAPKMSSTTRRRFNLIAFTPGPVT) the chain is on the cytoplasmic side. The helical transmembrane segment at 61 to 81 (VISSLVYLALLIPLLLVHTIV) threads the bilayer. Residues 82–432 (PSAPKSNPKG…SFAVFRLHTL (351 aa)) are Vacuolar-facing. Asn159 carries N-linked (GlcNAc...) asparagine glycosylation. Zn(2+)-binding residues include His215 and Asp227. The Proton acceptor role is filled by Glu261. Positions 262, 287, and 360 each coordinate Zn(2+). The helical transmembrane segment at 433 to 453 (FAISVTLLVVCPIVLFVIGII) threads the bilayer. Residues 454 to 487 (LSKMDKMYLFSIHETIPETKEKVSVRGLRGLFRY) are Cytoplasmic-facing. A helical transmembrane segment spans residues 488-508 (PIILVVSSGILIGLSYLLAKV). Residues 509-518 (NPFIVHSSSY) are Vacuolar-facing. The chain crosses the membrane as a helical span at residues 519–539 (AVWSMMLSSWIFMTWFLSCIA). The Cytoplasmic segment spans residues 540 to 550 (DFFRPSALHRA). The helical transmembrane segment at 551–571 (YTFTWQLLVMWVLLVISTVYV) threads the bilayer. The Vacuolar portion of the chain corresponds to 572-575 (NQHD). The helical transmembrane segment at 576 to 596 (IAAGYFIVFYFAGTFLATLIS) threads the bilayer. Residues 597–710 (YLELFALPNK…WSASLPTWTW (114 aa)) lie on the Cytoplasmic side of the membrane. Positions 614-629 (SQYPSRLGSNRSSRIL) are enriched in polar residues. A disordered region spans residues 614–660 (SQYPSRLGSNRSSRILSPSADELPTGGDNNGEIYDGEEEPTESSSLL). A helical membrane pass occupies residues 711-731 (VLQFLFVGPVVIMFIGQLGLF). Residues 732-743 (LTSAMNQVGADG) are Vacuolar-facing. Residues 744 to 764 (VGLLVVYIAIAVFSVLLLIPL) form a helical membrane-spanning segment. Residues 765–777 (SPFIHRFTYHVPT) lie on the Cytoplasmic side of the membrane. A helical membrane pass occupies residues 778–798 (FLLLVFIATLIYNLAAFPFSA). At 799–1012 (ENRLKIFFVQ…DGLVEVSRGF (214 aa)) the chain is on the vacuolar side. Asn842 and Asn878 each carry an N-linked (GlcNAc...) asparagine glycan.

This sequence belongs to the peptidase M28 family. Zn(2+) serves as cofactor.

The protein resides in the vacuole membrane. Functionally, may be involved in vacuolar sorting and osmoregulation. In Coccidioides posadasii (strain C735) (Valley fever fungus), this protein is Vacuolar membrane protease.